The primary structure comprises 173 residues: MSRKKKPIDIFLQPGEYFVADAGYQIRTMLGSCVSITLWHPATRQGAMSHFLLPTRGASKPKQTLDARYGDEALKLMLIELQRLGIPSAQCQGKIFGGGNMFPGNLRSGALNVGQRNGEAALTLLREHGIPVMSESLFGIGHRQIVFDVSNGDVWSHQVMPIGTDSGDKGDLL.

This sequence belongs to the CheD family.

The enzyme catalyses L-glutaminyl-[protein] + H2O = L-glutamyl-[protein] + NH4(+). Functionally, probably deamidates glutamine residues to glutamate on methyl-accepting chemotaxis receptors (MCPs), playing an important role in chemotaxis. The chain is Probable chemoreceptor glutamine deamidase CheD 2 from Albidiferax ferrireducens (strain ATCC BAA-621 / DSM 15236 / T118) (Rhodoferax ferrireducens).